A 411-amino-acid chain; its full sequence is Serpin A3-1 (411 aa).

The N-terminal stretch at 1–24 (MRAERTSFLLALGLLVAGIRSVHC) is a signal peptide. Residues Asn100, Asn180, Asn230, and Asn264 are each glycosylated (N-linked (GlcNAc...) asparagine).

Belongs to the serpin family. In terms of assembly, homodimer. Post-translationally, N-glycosylated. Detected in all tissues examined (at protein level). Abundantly expressed in liver, kidney and spleen. Lowest levels were observed in diaphragm muscle.

Its subcellular location is the cytoplasmic vesicle. It localises to the secretory vesicle. It is found in the chromaffin granule. The protein resides in the secreted. Its function is as follows. Potent inhibitor of the serine proteases elastase and trypsin. Moderately inhibits the serine proteases plasmin and chymotrypsin, and the thiol protease proenkephalin-processing enzyme. Does not inhibit the serine proteases cathepsin G, furin, kallikrein, thrombin, tissue plasminogen activator and urokinase, or the cysteine proteases cathepsin B, cathepsin L and papain. The sequence is that of Serpin A3-1 from Bos taurus (Bovine).